We begin with the raw amino-acid sequence, 834 residues long: ABC transporter A family member 11 (834 aa).

7 helical membrane-spanning segments follow: residues 35–55, 188–208, 235–255, 269–289, 297–319, 324–346, and 355–375; these read FFILGILLPMISIGASIILNN, MPMILQYGFVFFIPYFAILIV, VFDYLIFLIPTIIGWILLYSF, FLLFLTFGISAIPFGFVLQFI, NKWLYPFTSIVTSIPSALISVAF, PLIVELLLSILPTFSFCNGLKAL, and SYTILIQLLSGLIYLILIYFI. Positions 452-693 constitute an ABC transporter domain; sequence LDKPSIIERC…YGSGYTIDII (242 aa). 495–502 is an ATP binding site; it reads GPNGSGKS. Polar residues predominate over residues 779-789; sequence KQQTNNKSNII. The segment at 779–834 is disordered; that stretch reads KQQTNNKSNIINNNNNNNNNNNNNNNNNNNNNNNNNNNNNNNNNTNNNTNNNQLIN. Positions 790–834 are enriched in low complexity; that stretch reads NNNNNNNNNNNNNNNNNNNNNNNNNNNNNNNNNTNNNTNNNQLIN.

It belongs to the ABC transporter superfamily. ABCA family.

It localises to the membrane. The protein is ABC transporter A family member 11 (abcA11) of Dictyostelium discoideum (Social amoeba).